Consider the following 294-residue polypeptide: rRNA 2'-O-methyltransferase fibrillarin (294 aa).

The segment at 1 to 62 (MGKDFKSGGG…GKFGAKGPRG (62 aa)) is disordered. Residues 20–56 (GPGGPGGRPFNKGPGGPGGPGGKFGGGRPGGPGGKFG) show a composition bias toward gly residues. An asymmetric dimethylarginine mark is found at arginine 27, arginine 47, and arginine 61. S-adenosyl-L-methionine-binding positions include 151–152 (TT), 170–171 (EF), 195–196 (DA), and 215–218 (DVAQ).

The protein belongs to the methyltransferase superfamily. Fibrillarin family. In terms of assembly, component of box C/D small nucleolar ribonucleoprotein (snoRNP) particles. It is associated with the U3, U8 and U13 small nuclear RNAs. In terms of processing, by homology to other fibrillarins, some or all of the N-terminal domain arginines are modified to asymmetric dimethylarginine (DMA).

It localises to the nucleus. The protein localises to the nucleolus. The catalysed reaction is L-glutaminyl-[histone H2A] + S-adenosyl-L-methionine = N(5)-methyl-L-glutaminyl-[histone H2A] + S-adenosyl-L-homocysteine + H(+). S-adenosyl-L-methionine-dependent methyltransferase that has the ability to methylate both RNAs and proteins. Involved in pre-rRNA processing. Utilizes the methyl donor S-adenosyl-L-methionine to catalyze the site-specific 2'-hydroxyl methylation of ribose moieties in pre-ribosomal RNA. Site specificity is provided by a guide RNA that base pairs with the substrate. Methylation occurs at a characteristic distance from the sequence involved in base pairing with the guide RNA. Also acts as a protein methyltransferase by mediating methylation of 'Gln-105' of histone H2A (H2AQ105me), a modification that impairs binding of the FACT complex and is specifically present at 35S ribosomal DNA locus. This is rRNA 2'-O-methyltransferase fibrillarin (FIB) from Tetrahymena thermophila.